Reading from the N-terminus, the 63-residue chain is Ferredoxin (63 aa).

The 4Fe-4S ferredoxin-type domain maps to 3–31 (WKVSVDVDTCIGDAICASLCPDVFEMGDD). 3 residues coordinate [4Fe-4S] cluster: cysteine 12, aspartate 15, and cysteine 18. A disulfide bond links cysteine 22 and cysteine 45. Residue cysteine 53 participates in [4Fe-4S] cluster binding.

[4Fe-4S] cluster serves as cofactor. It depends on [3Fe-4S] cluster as a cofactor.

In terms of biological role, ferredoxins are iron-sulfur proteins that transfer electrons in a wide variety of metabolic reactions. This chain is Ferredoxin (fdxA), found in Thermococcus kodakarensis (strain ATCC BAA-918 / JCM 12380 / KOD1) (Pyrococcus kodakaraensis (strain KOD1)).